The sequence spans 571 residues: Putative phospholipase B-like 1 (571 aa).

Positions 1–18 (MNWIFIFLAAAVAIGCEA) are cleaved as a signal peptide. Residues Asn-62, Asn-149, Asn-442, and Asn-473 are each glycosylated (N-linked (GlcNAc...) asparagine).

Belongs to the phospholipase B-like family.

It localises to the lysosome. In terms of biological role, putative phospholipase. This Caenorhabditis elegans protein is Putative phospholipase B-like 1.